A 734-amino-acid polypeptide reads, in one-letter code: Photosystem I P700 chlorophyll a apoprotein A2 (734 aa).

The next 8 membrane-spanning stretches (helical) occupy residues 46 to 69, 135 to 158, 175 to 199, 273 to 291, 330 to 353, 369 to 395, 417 to 439, and 517 to 535; these read IFAS…FHVA, LYTA…LHLQ, LNHH…HVAI, IAHH…GHQY, LHFQ…QHIY, AALY…IFFI, AIIS…LYVH, and FLVH…LILV. Cys-559 and Cys-568 together coordinate [4Fe-4S] cluster. The next 2 membrane-spanning stretches (helical) occupy residues 575–596 and 643–665; these read AFYL…YFHW and LGVW…MFLI. Residues His-654, Met-662, and Tyr-670 each contribute to the chlorophyll a site. Trp-671 serves as a coordination point for phylloquinone. The helical transmembrane segment at 707-727 threads the bilayer; it reads LVGLVHFSVGYVLTYGSFLIA.

The protein belongs to the PsaA/PsaB family. In terms of assembly, the PsaA/B heterodimer binds the P700 chlorophyll special pair and subsequent electron acceptors. PSI consists of a core antenna complex that captures photons, and an electron transfer chain that converts photonic excitation into a charge separation. The eukaryotic PSI reaction center is composed of at least 11 subunits. P700 is a chlorophyll a/chlorophyll a' dimer, A0 is one or more chlorophyll a, A1 is one or both phylloquinones and FX is a shared 4Fe-4S iron-sulfur center. is required as a cofactor.

Its subcellular location is the plastid. The protein localises to the chloroplast thylakoid membrane. It catalyses the reaction reduced [plastocyanin] + hnu + oxidized [2Fe-2S]-[ferredoxin] = oxidized [plastocyanin] + reduced [2Fe-2S]-[ferredoxin]. PsaA and PsaB bind P700, the primary electron donor of photosystem I (PSI), as well as the electron acceptors A0, A1 and FX. PSI is a plastocyanin/cytochrome c6-ferredoxin oxidoreductase, converting photonic excitation into a charge separation, which transfers an electron from the donor P700 chlorophyll pair to the spectroscopically characterized acceptors A0, A1, FX, FA and FB in turn. Oxidized P700 is reduced on the lumenal side of the thylakoid membrane by plastocyanin or cytochrome c6. This chain is Photosystem I P700 chlorophyll a apoprotein A2, found in Oltmannsiellopsis viridis (Marine flagellate).